Consider the following 282-residue polypeptide: MLVCVFVALYTMMGLLTDIKQLQSDFDDEMFEFRAITKDTWQRIVTKHTYPGGVDEETIESHPPTFETLFGTRKARQAYPEQCNCGPKSEGCPAGPPGPPGEGGQSGEPGHDGDDGKPGAPGVIVAITHDIPGGCIKCPPGRPGPRGPSGLVGPAGPAGDQGRHGPPGPTGGQGGPGEQGDAGRPGAAGRPGPPGPRGEPGTEYRPGQAGRAGPPGPRGPPGPEGNPGGAGEDGNQGPVGHPGVPGRPGIPGKSGTCGEHGGPGEPGPDAGYCPCPGRSYKA.

The signal sequence occupies residues 1 to 24 (MLVCVFVALYTMMGLLTDIKQLQS). The segment at 86 to 282 (GPKSEGCPAG…CPCPGRSYKA (197 aa)) is disordered. Triple-helical region stretches follow at residues 95 to 124 (GPPGPPGEGGQSGEPGHDGDDGKPGAPGVI) and 141 to 269 (GRPG…PGPD). The span at 170 to 180 (TGGQGGPGEQG) shows a compositional bias: gly residues. Residues 214–224 (PPGPRGPPGPE) show a composition bias toward pro residues. The segment covering 225 to 234 (GNPGGAGEDG) has biased composition (gly residues). Positions 235-244 (NQGPVGHPGV) are enriched in low complexity.

It belongs to the cuticular collagen family. As to quaternary structure, collagen polypeptide chains are complexed within the cuticle by disulfide bonds and other types of covalent cross-links.

Functionally, nematode cuticles are composed largely of collagen-like proteins. The cuticle functions both as an exoskeleton and as a barrier to protect the worm from its environment. In Caenorhabditis elegans, this protein is Cuticle collagen 8 (col-8).